We begin with the raw amino-acid sequence, 322 residues long: 4-hydroxy-3-methylbut-2-enyl diphosphate reductase (322 aa).

Cys15 contributes to the [4Fe-4S] cluster binding site. Positions 44 and 77 each coordinate (2E)-4-hydroxy-3-methylbut-2-enyl diphosphate. Residues His44 and His77 each contribute to the dimethylallyl diphosphate site. Residues His44 and His77 each contribute to the isopentenyl diphosphate site. Cys99 provides a ligand contact to [4Fe-4S] cluster. (2E)-4-hydroxy-3-methylbut-2-enyl diphosphate is bound at residue His127. Dimethylallyl diphosphate is bound at residue His127. His127 lines the isopentenyl diphosphate pocket. Glu129 functions as the Proton donor in the catalytic mechanism. (2E)-4-hydroxy-3-methylbut-2-enyl diphosphate is bound at residue Thr168. Residue Cys198 coordinates [4Fe-4S] cluster. Positions 226, 227, 228, and 270 each coordinate (2E)-4-hydroxy-3-methylbut-2-enyl diphosphate. Positions 226, 227, 228, and 270 each coordinate dimethylallyl diphosphate. Isopentenyl diphosphate contacts are provided by Ser226, Ser227, Asn228, and Ser270.

The protein belongs to the IspH family. It depends on [4Fe-4S] cluster as a cofactor.

It catalyses the reaction isopentenyl diphosphate + 2 oxidized [2Fe-2S]-[ferredoxin] + H2O = (2E)-4-hydroxy-3-methylbut-2-enyl diphosphate + 2 reduced [2Fe-2S]-[ferredoxin] + 2 H(+). The enzyme catalyses dimethylallyl diphosphate + 2 oxidized [2Fe-2S]-[ferredoxin] + H2O = (2E)-4-hydroxy-3-methylbut-2-enyl diphosphate + 2 reduced [2Fe-2S]-[ferredoxin] + 2 H(+). It functions in the pathway isoprenoid biosynthesis; dimethylallyl diphosphate biosynthesis; dimethylallyl diphosphate from (2E)-4-hydroxy-3-methylbutenyl diphosphate: step 1/1. The protein operates within isoprenoid biosynthesis; isopentenyl diphosphate biosynthesis via DXP pathway; isopentenyl diphosphate from 1-deoxy-D-xylulose 5-phosphate: step 6/6. Catalyzes the conversion of 1-hydroxy-2-methyl-2-(E)-butenyl 4-diphosphate (HMBPP) into a mixture of isopentenyl diphosphate (IPP) and dimethylallyl diphosphate (DMAPP). Acts in the terminal step of the DOXP/MEP pathway for isoprenoid precursor biosynthesis. The polypeptide is 4-hydroxy-3-methylbut-2-enyl diphosphate reductase (Neisseria gonorrhoeae (strain ATCC 700825 / FA 1090)).